Consider the following 197-residue polypeptide: Sec-independent protein translocase protein TatB (197 aa).

The chain crosses the membrane as a helical span at residues 1–21 (MFDIGFGELLLVMVLGLIVLG). The segment at 93–197 (KRGYTETPSP…ASARQPSDSR (105 aa)) is disordered. Basic and acidic residues-rich tracts occupy residues 104–113 (KSDDPKKSGD) and 160–169 (NHNDGRHATS). Residues 180 to 197 (PEQSQPSAASARQPSDSR) are compositionally biased toward low complexity.

It belongs to the TatB family. In terms of assembly, the Tat system comprises two distinct complexes: a TatABC complex, containing multiple copies of TatA, TatB and TatC subunits, and a separate TatA complex, containing only TatA subunits. Substrates initially bind to the TatABC complex, which probably triggers association of the separate TatA complex to form the active translocon.

The protein localises to the cell inner membrane. In terms of biological role, part of the twin-arginine translocation (Tat) system that transports large folded proteins containing a characteristic twin-arginine motif in their signal peptide across membranes. Together with TatC, TatB is part of a receptor directly interacting with Tat signal peptides. TatB may form an oligomeric binding site that transiently accommodates folded Tat precursor proteins before their translocation. In Pectobacterium atrosepticum (strain SCRI 1043 / ATCC BAA-672) (Erwinia carotovora subsp. atroseptica), this protein is Sec-independent protein translocase protein TatB.